A 74-amino-acid chain; its full sequence is UPF0352 protein PM1884 (74 aa).

The protein belongs to the UPF0352 family.

This Pasteurella multocida (strain Pm70) protein is UPF0352 protein PM1884.